A 126-amino-acid chain; its full sequence is Holo-[acyl-carrier-protein] synthase (126 aa).

Residues Asp6 and Glu55 each contribute to the Mg(2+) site.

The protein belongs to the P-Pant transferase superfamily. AcpS family. The cofactor is Mg(2+).

The protein resides in the cytoplasm. It catalyses the reaction apo-[ACP] + CoA = holo-[ACP] + adenosine 3',5'-bisphosphate + H(+). In terms of biological role, transfers the 4'-phosphopantetheine moiety from coenzyme A to a Ser of acyl-carrier-protein. This chain is Holo-[acyl-carrier-protein] synthase, found in Chlorobium limicola (strain DSM 245 / NBRC 103803 / 6330).